Here is a 315-residue protein sequence, read N- to C-terminus: Probable cell division protein WhiA (315 aa).

The segment at residues 280 to 313 (SLKELGEMLDPPVGKSGINHRLRKIEKIAEELRT) is a DNA-binding region (H-T-H motif).

It belongs to the WhiA family.

Involved in cell division and chromosome segregation. This chain is Probable cell division protein WhiA, found in Clostridium beijerinckii (strain ATCC 51743 / NCIMB 8052) (Clostridium acetobutylicum).